Consider the following 310-residue polypeptide: Delta(1)-pyrroline-2-carboxylate reductase 1 (310 aa).

Belongs to the ornithine cyclodeaminase/mu-crystallin family.

The catalysed reaction is L-proline + NAD(+) = 1-pyrroline-2-carboxylate + NADH + H(+). It carries out the reaction L-proline + NADP(+) = 1-pyrroline-2-carboxylate + NADPH + H(+). In terms of biological role, catalyzes the reduction of Delta(1)-pyrroline-2-carboxylate (Pyr2C) to L-proline, using NADPH as the electron donor. May be involved in a degradation pathway that converts trans-3-hydroxy-L-proline (t3LHyp) to L-proline. This is Delta(1)-pyrroline-2-carboxylate reductase 1 from Burkholderia multivorans (strain ATCC 17616 / 249).